The primary structure comprises 588 residues: Calicin (588 aa).

The 113-residue stretch at 12–124 folds into the BTB domain; sequence SFVLQNLNRQ…RLRVHCNDFL (113 aa). Residues 133–235 form the BACK domain; that stretch reads CLRYLFLAEL…NAVSNKTLVF (103 aa). Serine 149 bears the Phosphoserine mark. Kelch repeat units lie at residues 280-327, 328-375, 377-423, 425-475, 476-525, and 526-580; these read SVVI…SAGR, YIYI…TCGG, VYSV…TKGD, HLYI…SFQQ, DNIL…IGDS, and KVFV…LAKL.

As to quaternary structure, interacts with CYLC1; the interaction may be relevant for proper acrosome attachment to the nuclear envelope. As to expression, expressed in testis, in spermatozoa (at protein level).

It is found in the cytoplasm. The protein resides in the cytoskeleton. It localises to the perinuclear theca. The protein localises to the calyx. Required for both nuclear and acrosomal shaping during spermiogenesis. The polypeptide is Calicin (CCIN) (Homo sapiens (Human)).